The primary structure comprises 184 residues: Holliday junction branch migration complex subunit RuvA (184 aa).

The interval 1–64 (MIVAVEGIIT…EDADLLYGFL (64 aa)) is domain I. Residues 65–145 (DEKEKRMFEM…ANDGEQYKIE (81 aa)) are domain II. Residue Glu-145 is a region of interest, flexible linker. Residues 145–184 (ETISALENLGFKRDKINKILLNCKSTNTADLIKEALKKLA) form a domain III region.

The protein belongs to the RuvA family. As to quaternary structure, homotetramer. Forms an RuvA(8)-RuvB(12)-Holliday junction (HJ) complex. HJ DNA is sandwiched between 2 RuvA tetramers; dsDNA enters through RuvA and exits via RuvB. An RuvB hexamer assembles on each DNA strand where it exits the tetramer. Each RuvB hexamer is contacted by two RuvA subunits (via domain III) on 2 adjacent RuvB subunits; this complex drives branch migration. In the full resolvosome a probable DNA-RuvA(4)-RuvB(12)-RuvC(2) complex forms which resolves the HJ.

The protein localises to the cytoplasm. In terms of biological role, the RuvA-RuvB-RuvC complex processes Holliday junction (HJ) DNA during genetic recombination and DNA repair, while the RuvA-RuvB complex plays an important role in the rescue of blocked DNA replication forks via replication fork reversal (RFR). RuvA specifically binds to HJ cruciform DNA, conferring on it an open structure. The RuvB hexamer acts as an ATP-dependent pump, pulling dsDNA into and through the RuvAB complex. HJ branch migration allows RuvC to scan DNA until it finds its consensus sequence, where it cleaves and resolves the cruciform DNA. The protein is Holliday junction branch migration complex subunit RuvA of Campylobacter hominis (strain ATCC BAA-381 / DSM 21671 / CCUG 45161 / LMG 19568 / NCTC 13146 / CH001A).